A 96-amino-acid chain; its full sequence is Co-chaperonin GroES (96 aa).

It belongs to the GroES chaperonin family. In terms of assembly, heptamer of 7 subunits arranged in a ring. Interacts with the chaperonin GroEL.

It localises to the cytoplasm. Functionally, together with the chaperonin GroEL, plays an essential role in assisting protein folding. The GroEL-GroES system forms a nano-cage that allows encapsulation of the non-native substrate proteins and provides a physical environment optimized to promote and accelerate protein folding. GroES binds to the apical surface of the GroEL ring, thereby capping the opening of the GroEL channel. This chain is Co-chaperonin GroES, found in Shewanella loihica (strain ATCC BAA-1088 / PV-4).